The sequence spans 649 residues: Acid beta-fructofuranosidase (649 aa).

Residues 1 to 22 (MEHHKPLLPTSSHAAPTSSTRK) are Cytoplasmic-facing. Positions 1-101 (MEHHKPLLPT…NLLFAGEGGA (101 aa)) are cleaved as a propeptide — removed in mature form. Residues 23–43 (DLLFVLCGLLFLSSLVAYGGY) traverse the membrane as a helical; Signal-anchor for type II membrane protein segment. The Lumenal segment spans residues 44–649 (RASGVPHAHL…PFPFNPDQKS (606 aa)). Residues 52–75 (HLSSPTSNHQQDHQSPTSLPSSKW) are disordered. Positions 54 to 72 (SSPTSNHQQDHQSPTSLPS) are enriched in polar residues. Residues 127 to 130 (WMND), Gln146, Trp154, and 189 to 190 (WT) each bind substrate. The active site involves Asp130. Asn210 is a glycosylation site (N-linked (GlcNAc...) (complex) asparagine). A substrate-binding site is contributed by 253 to 254 (RD). An N-linked (GlcNAc...) (complex) asparagine glycan is attached at Asn275. Substrate contacts are provided by Glu308 and Asp341. A disulfide bridge links Cys498 with Cys546. Asn618 is a glycosylation site (N-linked (GlcNAc...) (high mannose) asparagine).

The protein belongs to the glycosyl hydrolase 32 family. In terms of assembly, present in two forms, a 70 kDa monomer and a heterodimer of the 30 kDa and 38 kDa subunits. The ratio of the levels of the two forms within cells appears to be regulated developmentally.

It is found in the membrane. The protein localises to the vacuole lumen. The catalysed reaction is Hydrolysis of terminal non-reducing beta-D-fructofuranoside residues in beta-D-fructofuranosides.. It participates in glycan biosynthesis; sucrose metabolism. Possible role in the continued mobilization of sucrose to sink organs. This is Acid beta-fructofuranosidase (INVA) from Vigna radiata var. radiata (Mung bean).